Consider the following 359-residue polypeptide: 5-formaminoimidazole-4-carboxamide-1-(beta)-D-ribofuranosyl 5'-monophosphate synthetase (359 aa).

5-amino-1-(5-phospho-beta-D-ribosyl)imidazole-4-carboxamide-binding residues include His28 and Ser95. The ATP-grasp domain maps to 115 to 346; the sequence is ELMIWETDRD…MGRRIAREIK (232 aa). ATP contacts are provided by residues 144 to 206 and Glu228; that span reads PEEI…ANIY. Asn256 provides a ligand contact to 5-amino-1-(5-phospho-beta-D-ribosyl)imidazole-4-carboxamide. Residues Glu295 and Glu308 each contribute to the Mg(2+) site.

It belongs to the phosphohexose mutase family. It depends on Mg(2+) as a cofactor. Mn(2+) is required as a cofactor.

The catalysed reaction is 5-amino-1-(5-phospho-beta-D-ribosyl)imidazole-4-carboxamide + formate + ATP = 5-formamido-1-(5-phospho-D-ribosyl)imidazole-4-carboxamide + ADP + phosphate. It functions in the pathway purine metabolism; IMP biosynthesis via de novo pathway; 5-formamido-1-(5-phospho-D-ribosyl)imidazole-4-carboxamide from 5-amino-1-(5-phospho-D-ribosyl)imidazole-4-carboxamide (formate route): step 1/1. Functionally, catalyzes the ATP- and formate-dependent formylation of 5-aminoimidazole-4-carboxamide-1-beta-d-ribofuranosyl 5'-monophosphate (AICAR) to 5-formaminoimidazole-4-carboxamide-1-beta-d-ribofuranosyl 5'-monophosphate (FAICAR) in the absence of folates. The sequence is that of 5-formaminoimidazole-4-carboxamide-1-(beta)-D-ribofuranosyl 5'-monophosphate synthetase from Archaeoglobus fulgidus (strain ATCC 49558 / DSM 4304 / JCM 9628 / NBRC 100126 / VC-16).